The sequence spans 63 residues: Large ribosomal subunit protein bL32 (63 aa).

Positions 1 to 18 (MAHPKAKVSKSRRDKRRA) are enriched in basic residues. The tract at residues 1–25 (MAHPKAKVSKSRRDKRRAQFNARTK) is disordered.

The protein belongs to the bacterial ribosomal protein bL32 family.

The chain is Large ribosomal subunit protein bL32 from Chlorobium phaeovibrioides (strain DSM 265 / 1930) (Prosthecochloris vibrioformis (strain DSM 265)).